The following is a 337-amino-acid chain: Cytoskeleton protein RodZ (337 aa).

The Cytoplasmic segment spans residues 1 to 111 (MNTEATHDQN…LGKRRKKRDG (111 aa)). The 53-residue stretch at 19-71 (LRNAREQLGLSQQAVAERLCLKVSTVRDIEEDKAPADLASTFLRGYIRSYARL) folds into the HTH cro/C1-type domain. The segment at residues 30–49 (QQAVAERLCLKVSTVRDIEE) is a DNA-binding region (H-T-H motif). The helical; Signal-anchor for type II membrane protein transmembrane segment at 112–132 (WLMTFTWLVLFVVIGLSGAWW) threads the bilayer. Over 133 to 337 (WQDHKAQQEE…TLNAEQSPAQ (205 aa)) the chain is Periplasmic. Residues 145 to 167 (TMADQSSAELSSNSEQGQSVPLN) show a composition bias toward polar residues. The interval 145–237 (TMADQSSAEL…ATTTPDGAAP (93 aa)) is disordered. Residues 168–207 (TSTTTDPATTSTPPASVDTTATNTQTPAVTAPAPAVDPQQ) show a composition bias toward low complexity. The span at 208-218 (NAVVSPSQANV) shows a compositional bias: polar residues. Residues 219-237 (DTAATPAPTATTTPDGAAP) show a composition bias toward low complexity.

It belongs to the RodZ family.

It localises to the cell inner membrane. Cytoskeletal protein that is involved in cell-shape control through regulation of the length of the long axis. The chain is Cytoskeleton protein RodZ from Escherichia coli (strain 55989 / EAEC).